The sequence spans 72 residues: Large ribosomal subunit protein bL31 (72 aa).

The protein belongs to the bacterial ribosomal protein bL31 family. Type A subfamily. In terms of assembly, part of the 50S ribosomal subunit.

In terms of biological role, binds the 23S rRNA. This chain is Large ribosomal subunit protein bL31, found in Prosthecochloris aestuarii (strain DSM 271 / SK 413).